Consider the following 231-residue polypeptide: Probable amino-acid ABC transporter permease protein y4tG (231 aa).

Helical transmembrane passes span threonine 9–isoleucine 29, leucine 32–leucine 52, alanine 64–tyrosine 84, valine 86–isoleucine 106, tyrosine 161–leucine 181, and valine 196–valine 216. Residues leucine 28 to arginine 217 enclose the ABC transmembrane type-1 domain.

The protein belongs to the binding-protein-dependent transport system permease family. HisMQ subfamily.

Its subcellular location is the cell inner membrane. In terms of biological role, probably part of the binding-protein-dependent transport system y4tEFGH for an amino acid. Probably responsible for the translocation of the substrate across the membrane. In Sinorhizobium fredii (strain NBRC 101917 / NGR234), this protein is Probable amino-acid ABC transporter permease protein y4tG.